The following is a 140-amino-acid chain: Lymphocyte antigen 6 complex locus protein G5c (140 aa).

Residues 1-41 form the signal peptide; sequence MRFMAGPAGSQNPGPMCFHSSLQALYTVLLIVLVMMSLVFG. One can recognise a UPAR/Ly6 domain in the interval 60-140; sequence LRCYRCLLET…SQCCFLGFLQ (81 aa). Disulfide bonds link cysteine 62/cysteine 89, cysteine 65/cysteine 74, cysteine 81/cysteine 107, and cysteine 116/cysteine 133. Asparagine 96 carries N-linked (GlcNAc...) asparagine glycosylation.

In terms of assembly, forms oligomers. Post-translationally, N-glycosylated.

It is found in the secreted. May have a role in hematopoietic cell differentiation. In Macaca mulatta (Rhesus macaque), this protein is Lymphocyte antigen 6 complex locus protein G5c (LY6G5C).